We begin with the raw amino-acid sequence, 1205 residues long: PAN2-PAN3 deadenylation complex catalytic subunit Pan2 (1205 aa).

WD repeat units lie at residues 153 to 193 (DESE…QKYA), 195 to 231 (ETPG…VEHE), 244 to 280 (VHGN…AITP), and 328 to 367 (PVGP…SFNP). Residues 368–484 (YSRETEFALP…PTGREEEPLH (117 aa)) are linker. The USP domain maps to 485–924 (TVSKKYRKVT…VPAILYYVKR (440 aa)). A Phosphoserine modification is found at Ser784. The Exonuclease domain maps to 975–1147 (VGLDAEFVTL…EDARTALQLY (173 aa)). A divalent metal cation contacts are provided by Asp978, Glu980, Asp1087, and Asp1139. Positions 1179 to 1205 (WKVPEPESQSSPKSKAGLRPGALGWVG) are disordered. Over residues 1184–1193 (PESQSSPKSK) the composition is skewed to low complexity. Ser1189 bears the Phosphoserine mark.

This sequence belongs to the peptidase C19 family. PAN2 subfamily. As to quaternary structure, forms a heterotrimer with an asymmetric homodimer of the regulatory subunit PAN3 to form the poly(A)-nuclease (PAN) deadenylation complex. Interacts with PAN3 isoform 1/Pan3L and isoform 3/Pan3S. Interacts with ZFP36. The cofactor is a divalent metal cation.

It is found in the cytoplasm. Its subcellular location is the P-body. It localises to the nucleus. The enzyme catalyses Exonucleolytic cleavage of poly(A) to 5'-AMP.. With respect to regulation, positively regulated by the regulatory subunit PAN3. Catalytic subunit of the poly(A)-nuclease (PAN) deadenylation complex, one of two cytoplasmic mRNA deadenylases involved in general and miRNA-mediated mRNA turnover. PAN specifically shortens poly(A) tails of RNA and the activity is stimulated by poly(A)-binding protein (PABP). PAN deadenylation is followed by rapid degradation of the shortened mRNA tails by the CCR4-NOT complex. Deadenylated mRNAs are then degraded by two alternative mechanisms, namely exosome-mediated 3'-5' exonucleolytic degradation, or deadenylation-dependent mRNA decaping and subsequent 5'-3' exonucleolytic degradation by XRN1. Also acts as an important regulator of the HIF1A-mediated hypoxic response. Required for HIF1A mRNA stability independent of poly(A) tail length regulation. The sequence is that of PAN2-PAN3 deadenylation complex catalytic subunit Pan2 from Rattus norvegicus (Rat).